The primary structure comprises 275 residues: T-cell ecto-ADP-ribosyltransferase 2 (275 aa).

An N-terminal signal peptide occupies residues 1–20 (MPSNICKFFLTWWLIQQVTG). Cystine bridges form between cysteine 41-cysteine 243 and cysteine 141-cysteine 193. One can recognise a TR mART core domain in the interval 61–238 (AKLKVAWEEA…IFLDSPKRKK (178 aa)). NAD(+) is bound by residues tyrosine 98, arginine 146, and glutamine 164. Residue arginine 146 is part of the active site. The active site involves serine 167. Residue serine 202 participates in NAD(+) binding. An ADP-ribosylarginine; by autocatalysis modification is found at arginine 204. The active site involves glutamate 209. A lipid anchor (GPI-anchor amidated serine) is attached at serine 246. A propeptide spans 247–275 (SAGARESCVSLFLVVLPSLLVQLLCLAEP) (removed in mature form).

This sequence belongs to the Arg-specific ADP-ribosyltransferase family. As to expression, postthymic T-cells.

Its subcellular location is the cell membrane. It carries out the reaction L-arginyl-[protein] + NAD(+) = N(omega)-(ADP-D-ribosyl)-L-arginyl-[protein] + nicotinamide + H(+). The catalysed reaction is NAD(+) + H2O = ADP-D-ribose + nicotinamide + H(+). In terms of biological role, has both NAD(+) glycohydrolase and ADP-ribosyltransferase activity (to a lesser extent). This is T-cell ecto-ADP-ribosyltransferase 2 (Art2b) from Rattus norvegicus (Rat).